The following is a 454-amino-acid chain: MSQTDTITALATPPGRGSVGILRVSGPLAAPVARALLGKLPRPRQAEYLPFRDDDGTTLDQGIALFFPGPHSFTGEDVLELQGHGGPVILDLLLQRIVAMPGVRIARPGEFSERAFLNDKLDLAQAEAIADLIDASSAQAARSAINSLQGAFSGRIHELVKALTNLRIYVEAAIDFPDEEIDFLSEGKIEASLNDVIARLERVRTEARQGSLLREGMKVVIAGKPNAGKSSLLNALAGREAAIVTAIAGTTRDVLREHIHLDGMPLHIIDTAGLRNAGDEVERIGIERAWREIEQADHVLLMVDGAATPLSDPDMLWPAFIARLPSGMPVTVVRNKADLTGESVAISDISGYLLITLSAQSGVGMDLLRTHLKQSMGFTGGTEGGFLARRRHLDALETAATHLQQGKEQLVSACYGELLAEELRLAQQSLSEITGEFSSDDLLGRIFSSFCIGK.

Positions 23, 80, and 120 each coordinate (6S)-5-formyl-5,6,7,8-tetrahydrofolate. Residues 216 to 377 (GMKVVIAGKP…LRTHLKQSMG (162 aa)) enclose the TrmE-type G domain. A K(+)-binding site is contributed by asparagine 226. GTP is bound by residues 226–231 (NAGKSS), 245–251 (TAIAGTT), 270–273 (DTAG), and 335–338 (NKAD). Serine 230 contacts Mg(2+). Residues threonine 245, isoleucine 247, and threonine 250 each contribute to the K(+) site. Threonine 251 contacts Mg(2+). Residue lysine 454 coordinates (6S)-5-formyl-5,6,7,8-tetrahydrofolate.

This sequence belongs to the TRAFAC class TrmE-Era-EngA-EngB-Septin-like GTPase superfamily. TrmE GTPase family. Homodimer. Heterotetramer of two MnmE and two MnmG subunits. The cofactor is K(+).

The protein resides in the cytoplasm. Its function is as follows. Exhibits a very high intrinsic GTPase hydrolysis rate. Involved in the addition of a carboxymethylaminomethyl (cmnm) group at the wobble position (U34) of certain tRNAs, forming tRNA-cmnm(5)s(2)U34. This chain is tRNA modification GTPase MnmE, found in Sodalis glossinidius (strain morsitans).